Reading from the N-terminus, the 277-residue chain is Tumor necrosis factor receptor superfamily member 4 (277 aa).

The signal sequence occupies residues 1 to 28 (MCVGARRLGRGPCAALLLLGLGLSTVTG). Over 29–214 (LHCVGDTYPS…RPVEVPGGRA (186 aa)) the chain is Extracellular. TNFR-Cys repeat units lie at residues 30–65 (HCVGDTYPSNDRCCHECRPGNGMVSRCSRSQNTVCR) and 66–107 (PCGP…DTVC). 8 disulfides stabilise this stretch: Cys31–Cys42, Cys43–Cys56, Cys46–Cys64, Cys67–Cys81, Cys84–Cys99, Cys87–Cys107, Cys109–Cys125, and Cys128–Cys141. One copy of the TNFR-Cys 3; truncated repeat lies at 108–126 (RCRAGTQPLDSYKPGVDCA). A TNFR-Cys 4 repeat occupies 127–167 (PCPPGHFSPGDNQACKPWTNCTLAGKHTLQPASNSSDAICE). Residues Asn146 and Asn160 are each glycosylated (N-linked (GlcNAc...) asparagine). An intrachain disulfide couples Cys147 to Cys166. The interval 158 to 209 (ASNSSDAICEDRDPPATQPQETQGPPARPITVQPTEAWPRTSQGPSTRPVEV) is disordered. Residues 215 to 235 (VAAILGLGLVLGLLGPLAILL) form a helical membrane-spanning segment. Topologically, residues 236–277 (ALYLLRRDQRLPPDAHKPPGGGSFRTPIQEEQADAHSTLAKI) are cytoplasmic. The disordered stretch occupies residues 248–277 (PDAHKPPGGGSFRTPIQEEQADAHSTLAKI).

In terms of assembly, interacts with TRAF2, TRAF3 and TRAF5. As to quaternary structure, (Microbial infection) Interacts with Human herpesvirus 6B/HHV-6B gQ1:gQ2 proteins.

It is found in the membrane. Its function is as follows. Receptor for TNFSF4/OX40L/GP34. Is a costimulatory molecule implicated in long-term T-cell immunity. Functionally, (Microbial infection) Acts as a receptor for human herpesvirus 6B/HHV-6B. In Homo sapiens (Human), this protein is Tumor necrosis factor receptor superfamily member 4 (TNFRSF4).